The chain runs to 207 residues: Urease accessory protein UreG (207 aa).

16–23 (GPVGSGKT) contributes to the GTP binding site.

Belongs to the SIMIBI class G3E GTPase family. UreG subfamily. In terms of assembly, homodimer. UreD, UreF and UreG form a complex that acts as a GTP-hydrolysis-dependent molecular chaperone, activating the urease apoprotein by helping to assemble the nickel containing metallocenter of UreC. The UreE protein probably delivers the nickel.

The protein resides in the cytoplasm. In terms of biological role, facilitates the functional incorporation of the urease nickel metallocenter. This process requires GTP hydrolysis, probably effectuated by UreG. The sequence is that of Urease accessory protein UreG from Shewanella halifaxensis (strain HAW-EB4).